A 153-amino-acid polypeptide reads, in one-letter code: Histone H2B.8 (153 aa).

Basic and acidic residues-rich tracts occupy residues 1 to 28 (MAPK…EKAP) and 36 to 53 (EKRL…EGKK). The disordered stretch occupies residues 1-61 (MAPKAEKKPA…KKAGRKKAKK (61 aa)). 2 positions are modified to N6-acetyllysine: Lys7 and Lys37. Lys149 is covalently cross-linked (Glycyl lysine isopeptide (Lys-Gly) (interchain with G-Cter in ubiquitin)).

Belongs to the histone H2B family. In terms of assembly, the nucleosome is a histone octamer containing two molecules each of H2A, H2B, H3 and H4 assembled in one H3-H4 heterotetramer and two H2A-H2B heterodimers. The octamer wraps approximately 147 bp of DNA. In terms of processing, can be acetylated to form H2BK6ac and H2BK33ac. Monoubiquitinated by BRE1 to form H2BK143ub1 and deubiquitinated by UBP26. Required for heterochromatic histone H3 di- and trimethylation at H3K4me. May give a specific tag for epigenetic transcriptional activation.

The protein localises to the nucleus. The protein resides in the chromosome. Its function is as follows. Core component of nucleosome. Nucleosomes wrap and compact DNA into chromatin, limiting DNA accessibility to the cellular machineries which require DNA as a template. Histones thereby play a central role in transcription regulation, DNA repair, DNA replication and chromosomal stability. DNA accessibility is regulated via a complex set of post-translational modifications of histones, also called histone code, and nucleosome remodeling. This chain is Histone H2B.8 (H2B.8), found in Oryza sativa subsp. indica (Rice).